Consider the following 935-residue polypeptide: Inter-alpha-trypsin inhibitor heavy chain H2 (935 aa).

An N-terminal signal peptide occupies residues 1-18 (MKGLTCFLLCFLLSEAQG). A propeptide spanning residues 19-53 (FEIPTNGLSEFAEYGDLAELALGKFHVVPGNRRSQ) is cleaved from the precursor. Positions 45 to 174 (VVPGNRRSQE…KVQFELHYQE (130 aa)) constitute a VIT domain. A glycan (N-linked (GlcNAc...) asparagine) is linked at N107. E271 carries the 4-carboxyglutamate modification. Residues 297 to 457 (PKNILFVIDV…YDFLKRLSND (161 aa)) enclose the VWFA domain. N434 carries an N-linked (GlcNAc...) asparagine glycan. S455 bears the Phosphoserine mark. Residue D691 is modified to Aspartate 1-(chondroitin 4-sulfate)-ester. A propeptide spanning residues 692–935 (PHFIIYLPRS…PLLYSFLKRP (244 aa)) is cleaved from the precursor. A Phosphoserine modification is found at S875.

Belongs to the ITIH family. I-alpha-I plasma protease inhibitors are assembled from one or two heavy chains (HC) and one light chain, bikunin. Inter-alpha-inhibitor (I-alpha-I) is composed of ITIH1/HC1, ITIH2/HC2 and bikunin. Heavy chains are linked to bikunin via chondroitin 4-sulfate esterified to the alpha-carboxyl of the C-terminal aspartate after propeptide cleavage. Post-translationally, phosphorylated by FAM20C in the extracellular medium.

It localises to the secreted. Functionally, may act as a carrier of hyaluronan in serum or as a binding protein between hyaluronan and other matrix protein, including those on cell surfaces in tissues to regulate the localization, synthesis and degradation of hyaluronan which are essential to cells undergoing biological processes. This chain is Inter-alpha-trypsin inhibitor heavy chain H2 (ITIH2), found in Sus scrofa (Pig).